We begin with the raw amino-acid sequence, 345 residues long: Selenide, water dikinase (345 aa).

C16 is an active-site residue. Residues K19 and 46 to 48 contribute to the ATP site; that span reads TSD. D49 serves as a coordination point for Mg(2+). ATP is bound by residues D66, D89, and 136–138; that span reads GHT. A Mg(2+)-binding site is contributed by D89. A Mg(2+)-binding site is contributed by D224.

It belongs to the selenophosphate synthase 1 family. Class I subfamily. Homodimer. The cofactor is Mg(2+).

The enzyme catalyses hydrogenselenide + ATP + H2O = selenophosphate + AMP + phosphate + 2 H(+). In terms of biological role, synthesizes selenophosphate from selenide and ATP. The sequence is that of Selenide, water dikinase from Clostridium botulinum (strain Alaska E43 / Type E3).